Here is a 103-residue protein sequence, read N- to C-terminus: Iron-sulfur cluster assembly protein CyaY (103 aa).

This sequence belongs to the frataxin family.

Involved in iron-sulfur (Fe-S) cluster assembly. May act as a regulator of Fe-S biogenesis. This Rickettsia africae (strain ESF-5) protein is Iron-sulfur cluster assembly protein CyaY.